The following is a 340-amino-acid chain: Fructose-bisphosphate aldolase (340 aa).

Serine 53 provides a ligand contact to D-glyceraldehyde 3-phosphate. Aspartate 95 acts as the Proton donor in catalysis. Zn(2+)-binding residues include histidine 96, aspartate 131, glutamate 161, and histidine 212. Position 213 (glycine 213) interacts with dihydroxyacetone phosphate. Histidine 249 provides a ligand contact to Zn(2+). Dihydroxyacetone phosphate-binding positions include 250-252 and 271-274; these read GGS and NLDT.

This sequence belongs to the class II fructose-bisphosphate aldolase family. Zn(2+) is required as a cofactor.

The catalysed reaction is beta-D-fructose 1,6-bisphosphate = D-glyceraldehyde 3-phosphate + dihydroxyacetone phosphate. The protein operates within carbohydrate degradation; glycolysis; D-glyceraldehyde 3-phosphate and glycerone phosphate from D-glucose: step 4/4. In terms of biological role, catalyzes the aldol condensation of dihydroxyacetone phosphate (DHAP or glycerone-phosphate) with glyceraldehyde 3-phosphate (G3P) to form fructose 1,6-bisphosphate (FBP) in gluconeogenesis and the reverse reaction in glycolysis. In Streptomyces galbus, this protein is Fructose-bisphosphate aldolase (fba).